The chain runs to 98 residues: Small ribosomal subunit protein bS6 (98 aa).

Belongs to the bacterial ribosomal protein bS6 family.

Functionally, binds together with bS18 to 16S ribosomal RNA. The polypeptide is Small ribosomal subunit protein bS6 (Staphylococcus haemolyticus (strain JCSC1435)).